A 219-amino-acid polypeptide reads, in one-letter code: Large ribosomal subunit protein uL3 (219 aa).

The interval 113 to 142 (TTKGHGYQGNIHKDNQSRGPMAHGSRYHRR) is disordered.

It belongs to the universal ribosomal protein uL3 family. Part of the 50S ribosomal subunit. Forms a cluster with proteins L14 and L19.

Functionally, one of the primary rRNA binding proteins, it binds directly near the 3'-end of the 23S rRNA, where it nucleates assembly of the 50S subunit. In Limosilactobacillus reuteri (strain DSM 20016) (Lactobacillus reuteri), this protein is Large ribosomal subunit protein uL3.